A 984-amino-acid chain; its full sequence is Ephrin type-A receptor 3 (984 aa).

The first 20 residues, Met1–Arg20, serve as a signal peptide directing secretion. The Extracellular segment spans residues Glu21 to His541. The Eph LBD domain maps to Glu29 to Lys207. Asn232, Asn337, Asn391, Asn404, and Asn493 each carry an N-linked (GlcNAc...) asparagine glycan. Fibronectin type-III domains follow at residues Pro325 to Ala435 and Ala436 to Ser532. Residues Val542 to Gly565 traverse the membrane as a helical segment. The Cytoplasmic segment spans residues Arg566–Val984. A phosphotyrosine; by autocatalysis mark is found at Tyr597 and Tyr603. Positions Ile622 to Ile883 constitute a Protein kinase domain. ATP is bound by residues Gly629–Gly634, Lys654, and Glu701–Ser707. Tyr702 is modified (phosphotyrosine; by autocatalysis). The active-site Proton acceptor is the Asp747. Arg751–Asn752 lines the ATP pocket. Residue Tyr780 is modified to Phosphotyrosine; by autocatalysis. Residues Ala912–Gln976 form the SAM domain. A Phosphotyrosine modification is found at Tyr938. Residues Val982 to Val984 carry the PDZ-binding motif.

The protein belongs to the protein kinase superfamily. Tyr protein kinase family. Ephrin receptor subfamily. Heterotetramer upon binding of the ligand. The heterotetramer is composed of an ephrin dimer and a receptor dimer. Oligomerization is probably required to induce biological responses. Forms a ternary EFNA5-EPHA3-ADAM10 complex mediating EFNA5 extracellular domain shedding by ADAM10 which regulates the EFNA5-EPHA3 complex internalization and function. Interacts (phosphorylated) with PTPN1; dephosphorylates EPHA3 and may regulate its trafficking and function. Interacts (phosphorylated) with CRK; mediates EFNA5-EPHA3 signaling through RHOA GTPase activation. Interacts with NCK1 (via SH2 domain); mediates EFNA5-EPHA3 signaling. In terms of processing, autophosphorylates upon activation by EFNA5. Phosphorylation on Tyr-603 mediates interaction with NCK1. Dephosphorylated by PTPN1. As to expression, most abundant in the heart, brain and lung.

Its subcellular location is the cell membrane. It catalyses the reaction L-tyrosyl-[protein] + ATP = O-phospho-L-tyrosyl-[protein] + ADP + H(+). In terms of biological role, receptor tyrosine kinase which binds promiscuously membrane-bound ephrin family ligands residing on adjacent cells, leading to contact-dependent bidirectional signaling into neighboring cells. The signaling pathway downstream of the receptor is referred to as forward signaling while the signaling pathway downstream of the ephrin ligand is referred to as reverse signaling. Highly promiscuous for ephrin-A ligands it binds preferentially EFNA5. Upon activation by EFNA5 regulates cell-cell adhesion, cytoskeletal organization and cell migration. Plays a role in cardiac cells migration and differentiation and regulates the formation of the atrioventricular canal and septum during development probably through activation by EFNA1. Involved in the retinotectal mapping of neurons. May also control the segregation but not the guidance of motor and sensory axons during neuromuscular circuit development. This is Ephrin type-A receptor 3 (Epha3) from Rattus norvegicus (Rat).